Consider the following 485-residue polypeptide: Glutamyl-tRNA(Gln) amidotransferase subunit A (485 aa).

Catalysis depends on charge relay system residues K79 and S154. The active-site Acyl-ester intermediate is S178.

Belongs to the amidase family. GatA subfamily. In terms of assembly, heterotrimer of A, B and C subunits.

It catalyses the reaction L-glutamyl-tRNA(Gln) + L-glutamine + ATP + H2O = L-glutaminyl-tRNA(Gln) + L-glutamate + ADP + phosphate + H(+). Allows the formation of correctly charged Gln-tRNA(Gln) through the transamidation of misacylated Glu-tRNA(Gln) in organisms which lack glutaminyl-tRNA synthetase. The reaction takes place in the presence of glutamine and ATP through an activated gamma-phospho-Glu-tRNA(Gln). The protein is Glutamyl-tRNA(Gln) amidotransferase subunit A of Staphylococcus haemolyticus (strain JCSC1435).